We begin with the raw amino-acid sequence, 192 residues long: Ion-translocating oxidoreductase complex subunit B (192 aa).

Residues 1–26 (MNAIWIAVAAVSLLGLAFGAILGYAS) form a hydrophobic region. One can recognise a 4Fe-4S domain in the interval 32–91 (EDDPVVEKIDEILPQSQCGQCGYPGCRPYAEAISCNGEKINRCAPGGEAVMLKIAELLNV). [4Fe-4S] cluster-binding residues include cysteine 49, cysteine 52, cysteine 57, cysteine 74, cysteine 117, cysteine 120, cysteine 123, cysteine 127, cysteine 147, cysteine 150, cysteine 153, and cysteine 157. 2 consecutive 4Fe-4S ferredoxin-type domains span residues 108–137 (MVAV…GATR) and 138–167 (AMHT…LQPV).

Belongs to the 4Fe4S bacterial-type ferredoxin family. RnfB subfamily. The complex is composed of six subunits: RsxA, RsxB, RsxC, RsxD, RsxE and RsxG. [4Fe-4S] cluster serves as cofactor.

It localises to the cell inner membrane. Functionally, part of a membrane-bound complex that couples electron transfer with translocation of ions across the membrane. Required to maintain the reduced state of SoxR. The sequence is that of Ion-translocating oxidoreductase complex subunit B from Escherichia coli O139:H28 (strain E24377A / ETEC).